A 303-amino-acid polypeptide reads, in one-letter code: 2-dehydropantoate 2-reductase (303 aa).

NADP(+) is bound by residues 7-12 (GCGALG), Asn-98, and Ala-122. Position 98 (Asn-98) interacts with substrate. Lys-176 functions as the Proton donor in the catalytic mechanism. Residues Asn-180, Asn-184, Asn-194, and Ser-244 each coordinate substrate. Residue Glu-256 participates in NADP(+) binding.

Belongs to the ketopantoate reductase family.

It localises to the cytoplasm. It carries out the reaction (R)-pantoate + NADP(+) = 2-dehydropantoate + NADPH + H(+). It participates in cofactor biosynthesis; (R)-pantothenate biosynthesis; (R)-pantoate from 3-methyl-2-oxobutanoate: step 2/2. Catalyzes the NADPH-dependent reduction of ketopantoate into pantoic acid. The sequence is that of 2-dehydropantoate 2-reductase (panE) from Yersinia pestis.